Here is a 271-residue protein sequence, read N- to C-terminus: Shikimate dehydrogenase (NADP(+)) (271 aa).

Shikimate is bound by residues Ser-14–Ser-16 and Thr-61. The active-site Proton acceptor is Lys-65. Shikimate-binding residues include Asn-86 and Asp-101. Residues Gly-125–Ala-129, Asn-148–Arg-153, and Met-212 each bind NADP(+). Tyr-214 contacts shikimate. NADP(+) is bound at residue Gly-236.

This sequence belongs to the shikimate dehydrogenase family. In terms of assembly, homodimer.

The catalysed reaction is shikimate + NADP(+) = 3-dehydroshikimate + NADPH + H(+). The protein operates within metabolic intermediate biosynthesis; chorismate biosynthesis; chorismate from D-erythrose 4-phosphate and phosphoenolpyruvate: step 4/7. Functionally, involved in the biosynthesis of the chorismate, which leads to the biosynthesis of aromatic amino acids. Catalyzes the reversible NADPH linked reduction of 3-dehydroshikimate (DHSA) to yield shikimate (SA). The chain is Shikimate dehydrogenase (NADP(+)) from Edwardsiella ictaluri (strain 93-146).